The following is a 298-amino-acid chain: MDNNIIIGAMTALITPFKNGKLDEQTYHKLIKRQIANGIDAVVPVGTTGESATLTHEEHRICIEIALDACKGSSCKVLAGAGSNATHEAVSLAKFAQEHGADGILSVTPYYNKPTQEGLYLHYKEIAKSIDIPVLLYNVPGRTGCDLQTETIIRLFRDCENIYGVKEASGSIDKCVDLLAHEPRMMLLSGEDAINYPILSNGGKGVISVTSNLLPDMISKLTHFALEEKYIEAKKINDELYNINKILFCESNPIPIKAAMYIAGLTPTLEYRLPLCKPSDCNLAKIEAIMKNYDIKGF.

Residue Thr48 participates in pyruvate binding. The Proton donor/acceptor role is filled by Tyr137. Lys166 (schiff-base intermediate with substrate) is an active-site residue. Ile207 contacts pyruvate.

The protein belongs to the DapA family. In terms of assembly, homotetramer; dimer of dimers.

The protein localises to the cytoplasm. The catalysed reaction is L-aspartate 4-semialdehyde + pyruvate = (2S,4S)-4-hydroxy-2,3,4,5-tetrahydrodipicolinate + H2O + H(+). The protein operates within amino-acid biosynthesis; L-lysine biosynthesis via DAP pathway; (S)-tetrahydrodipicolinate from L-aspartate: step 3/4. Functionally, catalyzes the condensation of (S)-aspartate-beta-semialdehyde [(S)-ASA] and pyruvate to 4-hydroxy-tetrahydrodipicolinate (HTPA). This chain is 4-hydroxy-tetrahydrodipicolinate synthase, found in Campylobacter lari (strain RM2100 / D67 / ATCC BAA-1060).